Consider the following 1052-residue polypeptide: F-box/WD repeat-containing protein 10 (1052 aa).

The WD 1 repeat unit spans residues 169–206 (GLNQDITDVCFSPEKDHSSKSATSQVYWTAKTQHTSLP). Positions 276 to 323 (DFIRYLPIHLSKYILRMLDRHTLNKCASVSQHWAAMAQQVKMDLSAHG) constitute an F-box domain. 6 WD repeats span residues 409 to 447 (SDTW…AIPV), 451 to 490 (GHAG…CTRI), 493 to 532 (GHQG…KTFR), 534 to 569 (KDPI…LVKT), 572 to 609 (GHEG…ERCL), and 611 to 652 (AFKH…KVLK). Residues 690-719 (YAVEKTKQKKNKEKEEEKEENSLMEILSKC) adopt a coiled-coil conformation. Residues 766-805 (LQSQGKSKSPRRDADDVEKAQKQGQLETPGKLPSHPKKKS) are disordered. Residues 775 to 786 (PRRDADDVEKAQ) show a composition bias toward basic and acidic residues. Residues 986–1010 (VLLTVKEEKEHQEAKMKEYQAREST) are a coiled coil.

Functionally, probable substrate-recognition component of a SCF (SKP1-CUL1-F-box protein)-type E3 ubiquitin ligase complex which mediates the ubiquitination and subsequent proteasomal degradation of target proteins. Overexpression is leading to degradation of CBX5 and CBX1. The chain is F-box/WD repeat-containing protein 10 (FBXW10) from Homo sapiens (Human).